Consider the following 202-residue polypeptide: Na(+)-translocating NADH-quinone reductase subunit E (202 aa).

Helical transmembrane passes span 11-31, 35-55, 81-101, 114-134, 144-164, and 180-200; these read AVFI…FLAV, VTTS…SVPV, FLRF…LEMA, GIFL…SFMV, VVYG…LAGI, and LGIT…FSGI.

Belongs to the NqrDE/RnfAE family. Composed of six subunits; NqrA, NqrB, NqrC, NqrD, NqrE and NqrF.

The protein localises to the cell inner membrane. The catalysed reaction is a ubiquinone + n Na(+)(in) + NADH + H(+) = a ubiquinol + n Na(+)(out) + NAD(+). NQR complex catalyzes the reduction of ubiquinone-1 to ubiquinol by two successive reactions, coupled with the transport of Na(+) ions from the cytoplasm to the periplasm. NqrA to NqrE are probably involved in the second step, the conversion of ubisemiquinone to ubiquinol. This Pseudoalteromonas translucida (strain TAC 125) protein is Na(+)-translocating NADH-quinone reductase subunit E.